We begin with the raw amino-acid sequence, 425 residues long: Protein CLP1 homolog (425 aa).

ATP-binding positions include E18, K59, and 121 to 126; that span reads DVGKST.

It belongs to the Clp1 family. Clp1 subfamily.

The protein resides in the nucleus. In terms of biological role, required for endonucleolytic cleavage during polyadenylation-dependent pre-mRNA 3'-end formation. In Drosophila grimshawi (Hawaiian fruit fly), this protein is Protein CLP1 homolog (cbc).